Here is a 166-residue protein sequence, read N- to C-terminus: NADH-quinone oxidoreductase subunit A (166 aa).

3 helical membrane-spanning segments follow: residues 16–36 (FAVFLIGAVGLCGLMLLGAYF), 68–88 (FYLVAMFFVIFDVEALYLYAW), and 98–118 (IGFIEAAIFILVLLAGLFYLV). Positions 141-166 (RYASSHPQDISQELSVAGSQQANESR) are disordered.

It belongs to the complex I subunit 3 family. NDH-1 is composed of 13 different subunits. Subunits NuoA, H, J, K, L, M, N constitute the membrane sector of the complex.

Its subcellular location is the cell inner membrane. It carries out the reaction a quinone + NADH + 5 H(+)(in) = a quinol + NAD(+) + 4 H(+)(out). In terms of biological role, NDH-1 shuttles electrons from NADH, via FMN and iron-sulfur (Fe-S) centers, to quinones in the respiratory chain. The immediate electron acceptor for the enzyme in this species is believed to be ubiquinone. Couples the redox reaction to proton translocation (for every two electrons transferred, four hydrogen ions are translocated across the cytoplasmic membrane), and thus conserves the redox energy in a proton gradient. The protein is NADH-quinone oxidoreductase subunit A of Yersinia pseudotuberculosis serotype O:1b (strain IP 31758).